The chain runs to 427 residues: Light-independent protochlorophyllide reductase subunit N (427 aa).

Positions 30, 55, and 116 each coordinate [4Fe-4S] cluster.

This sequence belongs to the BchN/ChlN family. Protochlorophyllide reductase is composed of three subunits; BchL, BchN and BchB. Forms a heterotetramer of two BchB and two BchN subunits. It depends on [4Fe-4S] cluster as a cofactor.

It carries out the reaction chlorophyllide a + oxidized 2[4Fe-4S]-[ferredoxin] + 2 ADP + 2 phosphate = protochlorophyllide a + reduced 2[4Fe-4S]-[ferredoxin] + 2 ATP + 2 H2O. It functions in the pathway porphyrin-containing compound metabolism; bacteriochlorophyll biosynthesis (light-independent). Component of the dark-operative protochlorophyllide reductase (DPOR) that uses Mg-ATP and reduced ferredoxin to reduce ring D of protochlorophyllide (Pchlide) to form chlorophyllide a (Chlide). This reaction is light-independent. The NB-protein (BchN-BchB) is the catalytic component of the complex. The chain is Light-independent protochlorophyllide reductase subunit N from Rhodopseudomonas palustris (strain BisA53).